The primary structure comprises 164 residues: Anthrone oxygenase AgnL2 (164 aa).

Transmembrane regions (helical) follow at residues 11 to 31 (VVTG…AVPV), 48 to 70 (RMYH…LYAY), and 85 to 105 (VFAL…LCMV).

It belongs to the anthrone oxygenase family.

The protein localises to the membrane. It carries out the reaction emodin anthrone + O2 = emodin + H2O + H(+). The protein operates within secondary metabolite biosynthesis. Functionally, anthrone oxygenase; part of the gene cluster that mediates the biosynthesis of agnestins, dihydroxy-xanthone metabolites. The pathway begins with the assembly and cyclization of atrochrysone thioester by the non-reducing polyketide synthase Agnpks1. The atrochrysone carboxyl ACP thioesterase AgnL7 then breaks the thioester bond and releases the atrochrysone carboxylic acid as the first enzyme-free intermediate. The decarboxylase AgnL1 then catalyzes the concerted decarboxylation-elimination required to convert atochrysone carboxylic acid into emodin anthrone, which is further oxidized to emodin by the anthrone oxygenase AgnL2. Emodin then undergoes reduction catalyzed by the oxidoreductase AgnL4 to yield the dihydroquinone tautomer which is the substrate for reduction by the short chain dehydrogenase AgnL6 reduction to produce hydroxyketone, followed by AgnL8 dehydration and likely spontaneous autoxidation to chrysophanol. Baeyer-Villiger oxidation by the oxidase AgnL3 leads to monodictyphenone via cleavage of the C-10/C-10a bond of chrysophanol. Alternative cleavage at the C-4a/C-10 bond of chrysophanol also leads to the formation some cephalone F. Further conversion to agnestins A and B, requires reduction to dihydro-monodictyphenone, oxidation to agnestin C probably via an epoxide, and rearrangement to either agnestin A or agnestin B directly, although agnestin A or agnestin B can also interconvert. Within the cluster, AgnR1 is the only unassigned oxidoreductase present which could be involved in this conversion. However, AgnR1 seems not to be involved in this step, and thus genes involved in the proposed oxidation/reduction may be located elsewhere on the genome. Further agnestin A derivatives are probably formed by spontaneous decarboxylations, dehydrations and methanolysis reactions. The protein is Anthrone oxygenase AgnL2 of Paecilomyces divaricatus (Penicillium divaricatum).